A 52-amino-acid chain; its full sequence is uncharacterized protein (52 aa).

Residues 24–52 (LRENPSKNVRTIPDAGDENSSFGHARVIA) are disordered.

This is an uncharacterized protein from Treponema pallidum (strain Nichols).